Reading from the N-terminus, the 365-residue chain is Chorismate synthase (365 aa).

Arg48 and Arg54 together coordinate NADP(+). Residues 125 to 127 (RSS), 238 to 239 (NA), Gly278, 293 to 297 (KPTSS), and Arg319 each bind FMN.

The protein belongs to the chorismate synthase family. As to quaternary structure, homotetramer. FMNH2 serves as cofactor.

The catalysed reaction is 5-O-(1-carboxyvinyl)-3-phosphoshikimate = chorismate + phosphate. It participates in metabolic intermediate biosynthesis; chorismate biosynthesis; chorismate from D-erythrose 4-phosphate and phosphoenolpyruvate: step 7/7. Its function is as follows. Catalyzes the anti-1,4-elimination of the C-3 phosphate and the C-6 proR hydrogen from 5-enolpyruvylshikimate-3-phosphate (EPSP) to yield chorismate, which is the branch point compound that serves as the starting substrate for the three terminal pathways of aromatic amino acid biosynthesis. This reaction introduces a second double bond into the aromatic ring system. The sequence is that of Chorismate synthase from Janthinobacterium sp. (strain Marseille) (Minibacterium massiliensis).